The sequence spans 208 residues: Ribosomal RNA small subunit methyltransferase G (208 aa).

S-adenosyl-L-methionine contacts are provided by residues G75, L80, 126–127, and R141; that span reads VE.

The protein belongs to the methyltransferase superfamily. RNA methyltransferase RsmG family.

The protein localises to the cytoplasm. It catalyses the reaction guanosine(527) in 16S rRNA + S-adenosyl-L-methionine = N(7)-methylguanosine(527) in 16S rRNA + S-adenosyl-L-homocysteine. Functionally, specifically methylates the N7 position of guanine in position 527 of 16S rRNA. The protein is Ribosomal RNA small subunit methyltransferase G of Marinomonas sp. (strain MWYL1).